Reading from the N-terminus, the 175-residue chain is ATP synthase subunit delta (175 aa).

The protein belongs to the ATPase delta chain family. In terms of assembly, F-type ATPases have 2 components, F(1) - the catalytic core - and F(0) - the membrane proton channel. F(1) has five subunits: alpha(3), beta(3), gamma(1), delta(1), epsilon(1). F(0) has three main subunits: a(1), b(2) and c(10-14). The alpha and beta chains form an alternating ring which encloses part of the gamma chain. F(1) is attached to F(0) by a central stalk formed by the gamma and epsilon chains, while a peripheral stalk is formed by the delta and b chains.

Its subcellular location is the cell membrane. In terms of biological role, f(1)F(0) ATP synthase produces ATP from ADP in the presence of a proton or sodium gradient. F-type ATPases consist of two structural domains, F(1) containing the extramembraneous catalytic core and F(0) containing the membrane proton channel, linked together by a central stalk and a peripheral stalk. During catalysis, ATP synthesis in the catalytic domain of F(1) is coupled via a rotary mechanism of the central stalk subunits to proton translocation. Its function is as follows. This protein is part of the stalk that links CF(0) to CF(1). It either transmits conformational changes from CF(0) to CF(1) or is implicated in proton conduction. The polypeptide is ATP synthase subunit delta (Elusimicrobium minutum (strain Pei191)).